The following is a 607-amino-acid chain: Zinc finger protein 750 (607 aa).

The CCHC-type zinc-finger motif lies at 25–51 (YQCFQCPFTCNIKSHLFNHMKYNLCKN). Residues Cys-27, Cys-30, His-43, and Cys-49 each contribute to the Zn(2+) site. A compositionally biased stretch (polar residues) spans 60–78 (MEQTGKASRASQHSPAFSH). Disordered stretches follow at residues 60–133 (MEQT…DKSE), 318–467 (RAVQ…SSQE), 482–511 (QALP…QDLE), and 575–607 (GQKR…SQNC). 2 stretches are compositionally biased toward basic and acidic residues: residues 79-133 (NSKE…DKSE) and 318-334 (RAVQ…RESP). Positions 369 to 380 (HSGSQSHIISGS) are enriched in low complexity. The span at 421–432 (DKEEDEETEEEI) shows a compositional bias: acidic residues. Residues 452 to 462 (HYPDRELHYDS) show a composition bias toward basic and acidic residues. Residues 496–507 (ISNAEVSTTESP) are compositionally biased toward polar residues. Residues 579–592 (ANNRPLRHTNKRAK) are compositionally biased toward basic residues.

It is found in the nucleus. Its function is as follows. Transcription factor involved in epidermis differentiation. The polypeptide is Zinc finger protein 750 (znf750) (Danio rerio (Zebrafish)).